A 296-amino-acid polypeptide reads, in one-letter code: Sulfotransferase 1E1 (296 aa).

Position 49 to 54 (Lys-49 to Trp-54) interacts with 3'-phosphoadenylyl sulfate. Lys-107–His-109 contributes to the substrate binding site. His-109 serves as the catalytic Proton acceptor. 3'-phosphoadenylyl sulfate is bound by residues Arg-131, Ser-139, Tyr-194, Thr-228 to Met-233, and Arg-258 to Gly-260.

It belongs to the sulfotransferase 1 family. Homodimer. In terms of processing, the N-terminus is blocked. As to expression, adrenal gland and much less in liver. Detectable only during pregnancy in uterine.

It is found in the cytoplasm. It localises to the cytosol. It catalyses the reaction estrone + 3'-phosphoadenylyl sulfate = estrone 3-sulfate + adenosine 3',5'-bisphosphate + H(+). The catalysed reaction is (24S)-hydroxycholesterol + 3'-phosphoadenylyl sulfate = (24S)-hydroxycholesterol 3-sulfate + adenosine 3',5'-bisphosphate + H(+). It carries out the reaction 17beta-estradiol + 3'-phosphoadenylyl sulfate = 17beta-estradiol 3-sulfate + adenosine 3',5'-bisphosphate + H(+). The enzyme catalyses 3beta-hydroxyandrost-5-en-17-one + 3'-phosphoadenylyl sulfate = dehydroepiandrosterone 3-sulfate + adenosine 3',5'-bisphosphate + H(+). It catalyses the reaction 4-ethylphenol + 3'-phosphoadenylyl sulfate = 4-ethylphenyl sulfate + adenosine 3',5'-bisphosphate + H(+). Its activity is regulated as follows. Inhibited by estradiol. In terms of biological role, sulfotransferase that utilizes 3'-phospho-5'-adenylyl sulfate (PAPS) as sulfonate donor to catalyze the sulfate conjugation of estradiol and estrone. Is a key enzyme in estrogen homeostasis, the sulfation of estrogens leads to their inactivation. Also sulfates dehydroepiandrosterone (DHEA), pregnenolone, (24S)-hydroxycholesteroland xenobiotic compounds like ethinylestradiol, equalenin, diethyl stilbesterol and 1-naphthol at significantly lower efficiency. Does not sulfonate cortisol, testosterone and dopamine. May play a role in gut microbiota-host metabolic interaction. O-sulfonates 4-ethylphenol (4-EP), a dietary tyrosine-derived metabolite produced by gut bacteria. The product 4-EPS crosses the blood-brain barrier and may negatively regulate oligodendrocyte maturation and myelination, affecting the functional connectivity of different brain regions associated with the limbic system. The protein is Sulfotransferase 1E1 (SULT1E1) of Cavia porcellus (Guinea pig).